The chain runs to 323 residues: Methenyltetrahydromethanopterin cyclohydrolase (323 aa).

This sequence belongs to the MCH family.

The protein resides in the cytoplasm. It catalyses the reaction 5,10-methenyl-5,6,7,8-tetrahydromethanopterin + H2O = N(5)-formyl-5,6,7,8-tetrahydromethanopterin + H(+). Its pathway is one-carbon metabolism; methanogenesis from CO(2); 5,10-methenyl-5,6,7,8-tetrahydromethanopterin from CO(2): step 3/3. Functionally, catalyzes the reversible interconversion of 5-formyl-H(4)MPT to methenyl-H(4)MPT(+). This chain is Methenyltetrahydromethanopterin cyclohydrolase, found in Methanococcus maripaludis (strain C5 / ATCC BAA-1333).